We begin with the raw amino-acid sequence, 328 residues long: Tetraacyldisaccharide 4'-kinase (328 aa).

55 to 62 (TAGGNGKT) contacts ATP.

This sequence belongs to the LpxK family.

It catalyses the reaction a lipid A disaccharide + ATP = a lipid IVA + ADP + H(+). It functions in the pathway glycolipid biosynthesis; lipid IV(A) biosynthesis; lipid IV(A) from (3R)-3-hydroxytetradecanoyl-[acyl-carrier-protein] and UDP-N-acetyl-alpha-D-glucosamine: step 6/6. In terms of biological role, transfers the gamma-phosphate of ATP to the 4'-position of a tetraacyldisaccharide 1-phosphate intermediate (termed DS-1-P) to form tetraacyldisaccharide 1,4'-bis-phosphate (lipid IVA). This chain is Tetraacyldisaccharide 4'-kinase, found in Escherichia coli O81 (strain ED1a).